The chain runs to 155 residues: MNKEQKSRLENLLEKVANVLDYKICSVNLQTNQNPIVIKIIIKKTNGDDISLDDCALFNTPASEEIENSNLLKCSYVLEISSQGVSDELTSERDFKTFKGFPVNVELNQKNSKIKFLNGLLYEKSKDYLAINIKGKIKKIPFNEVLKISLCTLKD.

Belongs to the RimP family.

It localises to the cytoplasm. In terms of biological role, required for maturation of 30S ribosomal subunits. This is Ribosome maturation factor RimP from Prochlorococcus marinus (strain MIT 9312).